A 467-amino-acid chain; its full sequence is Probable glutamate decarboxylase gamma (467 aa).

Position 278 is an N6-(pyridoxal phosphate)lysine (K278).

The protein belongs to the group II decarboxylase family. Requires pyridoxal 5'-phosphate as cofactor.

The catalysed reaction is L-glutamate + H(+) = 4-aminobutanoate + CO2. This is Probable glutamate decarboxylase gamma from Listeria monocytogenes serovar 1/2a (strain ATCC BAA-679 / EGD-e).